The following is a 2923-amino-acid chain: MRSPATGVPLPTPPPPLLLLLLLLLPPPLLGDQVGPCRSLGSRGRGSSGACAPMGWLCPSSASNLWLYTSRCRDAGTELTGHLVPHHDGLRVWCPESEAHIPLPPAPEGCPWSCRLLGIGGHLSPQGKLTLPEEHPCLKAPRLRCQSCKLAQAPGLRAGERSPEESLGGRRKRNVNTAPQFQPPSYQATVPENQPAGTPVASLRAIDPDEGEAGRLEYTMDALFDSRSNQFFSLDPVTGAVTTAEELDRETKSTHVFRVTAQDHGMPRRSALATLTILVTDTNDHDPVFEQQEYKESLRENLEVGYEVLTVRATDGDAPPNANILYRLLEGSGGSPSEVFEIDPRSGVIRTRGPVDREEVESYQLTVEASDQGRDPGPRSTTAAVFLSVEDDNDNAPQFSEKRYVVQVREDVTPGAPVLRVTASDRDKGSNAVVHYSIMSGNARGQFYLDAQTGALDVVSPLDYETTKEYTLRVRAQDGGRPPLSNVSGLVTVQVLDINDNAPIFVSTPFQATVLESVPLGYLVLHVQAIDADAGDNARLEYRLAGVGHDFPFTINNGTGWISVAAELDREEVDFYSFGVEARDHGTPALTASASVSVTVLDVNDNNPTFTQPEYTVRLNEDAAVGTSVVTVSAVDRDAHSVITYQITSGNTRNRFSITSQSGGGLVSLALPLDYKLERQYVLAVTASDGTRQDTAQIVVNVTDANTHRPVFQSSHYTVNVNEDRPAGTTVVLISATDEDTGENARITYFMEDSIPQFRIDADTGAVTTQAELDYEDQVSYTLAITARDNGIPQKSDTTYLEILVNDVNDNAPQFLRDSYQGSVYEDVPPFTSVLQISATDRDSGLNGRVFYTFQGGDDGDGDFIVESTSGIVRTLRRLDRENVAQYVLRAYAVDKGMPPARTPMEVTVTVLDVNDNPPVFEQDEFDVFVEENSPIGLAVARVTATDPDEGTNAQIMYQIVEGNIPEVFQLDIFSGELTALVDLDYEDRPEYVLVIQATSAPLVSRATVHVRLLDRNDNPPVLGNFEILFNNYVTNRSSSFPGGAIGRVPAHDPDISDSLTYSFERGNELSLVLLNASTGELKLSRALDNNRPLEAIMSVLVSDGVHSVTAQCALRVTIITDEMLTHSITLRLEDMSPERFLSPLLGLFIQAVAATLATPPDHVVVFNVQRDTDAPGGHILNVSLSVGQPPGPGGGPPFLPSEDLQERLYLNRSLLTAISAQRVLPFDDNICLREPCENYMRCVSVLRFDSSAPFIASSSVLFRPIHPVGGLRCRCPPGFTGDYCETEVDLCYSRPCGPHGRCRSREGGYTCLCRDGYTGEHCEVSARSGRCTPGVCKNGGTCVNLLVGGFKCDCPSGDFEKPYCQVTTRSFPAHSFITFRGLRQRFHFTLALSFATKERDGLLLYNGRFNEKHDFVALEVIQEQVQLTFSAGESTTTVSPFVPGGVSDGQWHTVQLKYYNKPLLGQTGLPQGPSEQKVAVVTVDGCDTGVALRFGSVLGNYSCAAQGTQGGSKKSLDLTGPLLLGGVPDLPESFPVRMRQFVGCMRNLQVDSRHIDMADFIANNGTVPGCPAKKNVCDSNTCHNGGTCVNQWDAFSCECPLGFGGKSCAQEMANPQHFLGSSLVAWHGLSLPISQPWYLSLMFRTRQADGVLLQAITRGRSTITLQLREGHVMLSVEGTGLQASSLRLEPGRANDGDWHHAQLALGASGGPGHAILSFDYGQQRAEGNLGPRLHGLHLSNITVGGIPGPAGGVARGFRGCLQGVRVSDTPEGVNSLDPSHGESINVEQGCSLPDPCDSNPCPANSYCSNDWDSYSCSCDPGYYGDNCTNVCDLNPCEHQSVCTRKPSAPHGYTCECPPNYLGPYCETRIDQPCPRGWWGHPTCGPCNCDVSKGFDPDCNKTSGECHCKENHYRPPGSPTCLLCDCYPTGSLSRVCDPEDGQCPCKPGVIGRQCDRCDNPFAEVTTNGCEVNYDSCPRAIEAGIWWPRTRFGLPAAAPCPKGSFGTAVRHCDEHRGWLPPNLFNCTSITFSELKGFAERLQRNESGLDSGRSQQLALLLRNATQHTAGYFGSDVKVAYQLATRLLAHESTQRGFGLSATQDVHFTENLLRVGSALLDTANKRHWELIQQTEGGTAWLLQHYEAYASALAQNMRHTYLSPFTIVTPNIVISVVRLDKGNFAGAKLPRYEALRGEQPPDLETTVILPESVFRETPPVVRPAGPGEAQEPEELARRQRRHPELSQGEAVASVIIYRTLAGLLPHNYDPDKRSLRVPKRPIINTPVVSISVHDDEELLPRALDKPVTVQFRLLETEERTKPICVFWNHSILVSGTGGWSARGCEVVFRNESHVSCQCNHMTSFAVLMDVSRRENGEILPLKTLTYVALGVTLAALLLTFFFLTLLRILRSNQHGIRRNLTAALGLAQLVFLLGINQADLPFACTVIAILLHFLYLCTFSWALLEALHLYRALTEVRDVNTGPMRFYYMLGWGVPAFITGLAVGLDPEGYGNPDFCWLSIYDTLIWSFAGPVAFAVSMSVFLYILAARASCAAQRQGFEKKGPVSGLQPSFAVLLLLSATWLLALLSVNSDTLLFHYLFATCNCIQGPFIFLSYVVLSKEVRKALKLACSRKPSPDPALTTKSTLTSSYNCPSPYADGRLYQPYGDSAGSLHSTSRSGKSQPSYIPFLLREESALNPGQGPPGLGDPGSLFLEGQDQQHDPDTDSDSDLSLEDDQSGSYASTHSSDSEEEEEEEEEEAAFPGEQGWDSLLGPGAERLPLHSTPKDGGPGPGKAPWPGDFGTTAKESSGNGAPEERLRENGDALSREGSLGPLPGSSAQPHKGILKKKCLPTISEKSSLLRLPLEQCTGSSRGSSASEGSRGGPPPRPPPRQSLQEQLNGVMPIAMSIKAGTVDEDSSGSEFLFFNFLH.

The first 31 residues, 1 to 31 (MRSPATGVPLPTPPPPLLLLLLLLLPPPLLG), serve as a signal peptide directing secretion. At 32 to 2380 (DQVGPCRSLG…GEILPLKTLT (2349 aa)) the chain is on the extracellular side. The disordered stretch occupies residues 154–198 (PGLRAGERSPEESLGGRRKRNVNTAPQFQPPSYQATVPENQPAGT). The segment covering 158-168 (AGERSPEESLG) has biased composition (basic and acidic residues). Over residues 175–196 (VNTAPQFQPPSYQATVPENQPA) the composition is skewed to polar residues. 9 consecutive Cadherin domains span residues 182–289 (QPPS…DPVF), 290–399 (EQQE…APQF), 400–505 (SEKR…APIF), 506–610 (VSTP…NPTF), 611–712 (TQPE…RPVF), 713–815 (QSSH…APQF), 816–921 (LRDS…PPVF), 922–1023 (EQDE…PPVL), and 1028–1146 (ILFN…SPLL). N-linked (GlcNAc...) asparagine glycosylation is found at Asn486, Asn557, and Asn701. N-linked (GlcNAc...) asparagine glycans are attached at residues Asn1036, Asn1076, Asn1182, and Asn1212. Residues 1228–1286 (DDNICLREPCENYMRCVSVLRFDSSAPFIASSSVLFRPIHPVGGLRCRCPPGFTGDYCE) form the EGF-like 1; calcium-binding domain. 9 disulfides stabilise this stretch: Cys1232/Cys1243, Cys1237/Cys1274, Cys1276/Cys1285, Cys1292/Cys1303, Cys1297/Cys1312, Cys1314/Cys1323, Cys1332/Cys1343, Cys1337/Cys1353, and Cys1355/Cys1365. Residues 1288-1324 (EVDLCYSRPCGPHGRCRSREGGYTCLCRDGYTGEHCE) enclose the EGF-like 2; calcium-binding domain. An EGF-like 3; calcium-binding domain is found at 1328-1366 (RSGRCTPGVCKNGGTCVNLLVGGFKCDCPSGDFEKPYCQ). The Laminin G-like 1 domain maps to 1367-1571 (VTTRSFPAHS…IANNGTVPGC (205 aa)). N-linked (GlcNAc...) asparagine glycosylation is found at Asn1501 and Asn1565. Intrachain disulfides connect Cys1545-Cys1571, Cys1578-Cys1589, Cys1583-Cys1598, and Cys1600-Cys1609. In terms of domain architecture, EGF-like 4; calcium-binding spans 1574 to 1610 (KKNVCDSNTCHNGGTCVNQWDAFSCECPLGFGGKSCA). Asn1591 is modified ((3R)-3-hydroxyasparagine). The Laminin G-like 2 domain maps to 1614 to 1791 (ANPQHFLGSS…GESINVEQGC (178 aa)). An N-linked (GlcNAc...) asparagine glycan is attached at Asn1741. Intrachain disulfides connect Cys1761–Cys1791, Cys1797–Cys1808, Cys1802–Cys1817, Cys1819–Cys1828, Cys1832–Cys1843, Cys1837–Cys1855, Cys1857–Cys1866, Cys1887–Cys1899, Cys1889–Cys1906, Cys1908–Cys1921, Cys1924–Cys1936, Cys1926–Cys1943, Cys1945–Cys1954, and Cys1957–Cys1969. Positions 1793–1828 (LPDPCDSNPCPANSYCSNDWDSYSCSCDPGYYGDNC) constitute an EGF-like 5; calcium-binding domain. Residue Asn1810 is modified to (3R)-3-hydroxyasparagine. Asn1827 is a glycosylation site (N-linked (GlcNAc...) asparagine). Positions 1829-1867 (TNVCDLNPCEHQSVCTRKPSAPHGYTCECPPNYLGPYCE) constitute an EGF-like 6; calcium-binding domain. The 40-residue stretch at 1883-1922 (TCGPCNCDVSKGFDPDCNKTSGECHCKENHYRPPGSPTCL) folds into the EGF-like 7; calcium-binding domain. A glycan (N-linked (GlcNAc...) asparagine) is linked at Asn1900. The Laminin EGF-like domain maps to 1924-1971 (CDCYPTGSLSRVCDPEDGQCPCKPGVIGRQCDRCDNPFAEVTTNGCEV). N-linked (GlcNAc...) asparagine glycosylation is found at Asn2024, Asn2043, and Asn2061. Positions 2199-2369 (ETTVILPESV…AVLMDVSRRE (171 aa)) constitute a GAIN-B domain. The disordered stretch occupies residues 2213 to 2238 (PPVVRPAGPGEAQEPEELARRQRRHP). Intrachain disulfides connect Cys2319/Cys2351 and Cys2339/Cys2353. Residues 2319–2369 (CVFWNHSILVSGTGGWSARGCEVVFRNESHVSCQCNHMTSFAVLMDVSRRE) are GPS. N-linked (GlcNAc...) asparagine glycans are attached at residues Asn2323 and Asn2345. Residues 2381–2401 (YVALGVTLAALLLTFFFLTLL) traverse the membrane as a helical segment. Residues 2402-2416 (RILRSNQHGIRRNLT) lie on the Cytoplasmic side of the membrane. The chain crosses the membrane as a helical span at residues 2417–2437 (AALGLAQLVFLLGINQADLPF). A topological domain (extracellular) is located at residue Ala2438. A helical membrane pass occupies residues 2439–2459 (CTVIAILLHFLYLCTFSWALL). Topologically, residues 2460–2480 (EALHLYRALTEVRDVNTGPMR) are cytoplasmic. Residues 2481–2501 (FYYMLGWGVPAFITGLAVGLD) traverse the membrane as a helical segment. The Extracellular segment spans residues 2502-2519 (PEGYGNPDFCWLSIYDTL). The chain crosses the membrane as a helical span at residues 2520 to 2540 (IWSFAGPVAFAVSMSVFLYIL). Topologically, residues 2541-2560 (AARASCAAQRQGFEKKGPVS) are cytoplasmic. A helical transmembrane segment spans residues 2561–2581 (GLQPSFAVLLLLSATWLLALL). The Extracellular portion of the chain corresponds to 2582-2591 (SVNSDTLLFH). The helical transmembrane segment at 2592–2612 (YLFATCNCIQGPFIFLSYVVL) threads the bilayer. The Cytoplasmic segment spans residues 2613-2923 (SKEVRKALKL…SEFLFFNFLH (311 aa)). Disordered regions lie at residues 2688–2838 (SALN…HKGI) and 2854–2888 (LRLPLEQCTGSSRGSSASEGSRGGPPPRPPPRQSL). 2 stretches are compositionally biased toward acidic residues: residues 2718–2730 (TDSDSDLSLEDDQ) and 2742–2753 (SEEEEEEEEEEA). The segment covering 2807–2819 (PEERLRENGDALS) has biased composition (basic and acidic residues). A compositionally biased stretch (low complexity) spans 2863-2873 (GSSRGSSASEG).

This sequence belongs to the G-protein coupled receptor 2 family. LN-TM7 subfamily. In terms of assembly, heterodimer of 2 chains generated by proteolytic processing; the large extracellular N-terminal fragment and the membrane-bound C-terminal fragment predominantly remain associated and non-covalently linked. In terms of processing, the iron and 2-oxoglutarate dependent 3-hydroxylation of aspartate and asparagine is (R) stereospecific within EGF domains. Post-translationally, autoproteolytically processed at the GPS region of the GAIN-B domain; this cleavage modulates receptor activity. Highest expression in brain and testis.

Its subcellular location is the cell membrane. Its function is as follows. Receptor that may have an important role in cell/cell signaling during nervous system formation. The protein is Cadherin EGF LAG seven-pass G-type receptor 2 of Homo sapiens (Human).